Here is an 887-residue protein sequence, read N- to C-terminus: Phosphatidylinositol 3-kinase catalytic subunit type 3 (887 aa).

Positions 35–184 (YKAVLEDPML…LAKLTKAHRQ (150 aa)) constitute a C2 PI3K-type domain. Residues 150–170 (EADGSEPTKTPGRTSSTLSED) form a disordered region. Polar residues predominate over residues 156 to 170 (PTKTPGRTSSTLSED). Thr163 bears the Phosphothreonine; by AMPK mark. Position 165 is a phosphoserine; by AMPK (Ser165). 3 positions are modified to phosphoserine: Ser244, Ser261, and Ser282. The PIK helical domain occupies 282-520 (SDHGLKPNAA…PKTHEMYLNV (239 aa)). Disordered regions lie at residues 416–435 (EPTKKESQGSVSESVSNSGI) and 446–468 (ITSPLPPVSSPPPASKTKESSDG). The span at 423–435 (QGSVSESVSNSGI) shows a compositional bias: low complexity. Residues 449 to 459 (PLPPVSSPPPA) show a composition bias toward pro residues. In terms of domain architecture, PI3K/PI4K catalytic spans 605-871 (IPETATLFKS…LIDESVHALF (267 aa)). Residues 611–617 (LFKSALM) are G-loop. Residues 740-748 (GVGDRHLDN) form a catalytic loop region. An activation loop region spans residues 759 to 780 (HIDFGYILGRDPKPLPPPMKLN).

The protein belongs to the PI3/PI4-kinase family. As to quaternary structure, component of the PI3K (PI3KC3/PI3K-III/class III phosphatidylinositol 3-kinase) complex the core of which is composed of the catalytic subunit PIK3C3, the regulatory subunit PIK3R4 and BECN1 associating with additional regulatory/auxiliary subunits to form alternative complex forms. Alternative complex forms containing a fourth regulatory subunit in a mutually exclusive manner are: the PI3K complex I (PI3KC3-C1) containing ATG14, and the PI3K complex II (PI3KC3-C2) containing UVRAG. PI3KC3-C1 displays a V-shaped architecture with PIK3R4 serving as a bridge between PIK3C3 and the ATG14:BECN1 subcomplex. Both, PI3KC3-C1 and PI3KC3-C2, can associate with further regulatory subunits such as RUBCN, SH3GLB1/Bif-1 and AMBRA1. PI3KC3-C1 probably associates with PIK3CB. Interacts with RAB7A in the presence of PIK3R4. Interacts with AMBRA1. Interacts with BECN1P1/BECN2. Interacts with SLAMF1. May be a component of a complex composed of RAB5A (in GDP-bound form), DYN2 and PIK3C3. Interacts with NCKAP1L. Interacts with ATG14; this interaction is increased in the absence of TMEM39A. Interacts with STEEP1; the interaction is STING1-dependent and required for trafficking of STING1 from the endoplasmic reticulum. Interacts with YWHAG. Interacts with ARMC3. Mn(2+) is required as a cofactor. In terms of processing, ubiquitinated via 'Lys-29'- and 'Lys-48'-linked ubiquitination by UBE3C, promoting its degradation. Deubiquitination by ZRANB1/TRABID promotes its stabilization, leading to autophagosome maturation.

It localises to the midbody. Its subcellular location is the late endosome. The protein resides in the cytoplasmic vesicle. The protein localises to the autophagosome. It carries out the reaction a 1,2-diacyl-sn-glycero-3-phospho-(1D-myo-inositol) + ATP = a 1,2-diacyl-sn-glycero-3-phospho-(1D-myo-inositol-3-phosphate) + ADP + H(+). In terms of biological role, catalytic subunit of the PI3K complex that mediates formation of phosphatidylinositol 3-phosphate; different complex forms are believed to play a role in multiple membrane trafficking pathways: PI3KC3-C1 is involved in initiation of autophagosomes and PI3KC3-C2 in maturation of autophagosomes and endocytosis. As part of PI3KC3-C1, promotes endoplasmic reticulum membrane curvature formation prior to vesicle budding. Involved in regulation of degradative endocytic trafficking and required for the abscission step in cytokinesis, probably in the context of PI3KC3-C2. Involved in the transport of lysosomal enzyme precursors to lysosomes. Required for transport from early to late endosomes. This Sus scrofa (Pig) protein is Phosphatidylinositol 3-kinase catalytic subunit type 3.